We begin with the raw amino-acid sequence, 181 residues long: Oligoribonuclease (181 aa).

The region spanning 8 to 171 (LVWLDMEMTG…ADIYESIDEL (164 aa)) is the Exonuclease domain. Residue Tyr129 is part of the active site.

The protein belongs to the oligoribonuclease family.

It localises to the cytoplasm. Functionally, 3'-to-5' exoribonuclease specific for small oligoribonucleotides. The polypeptide is Oligoribonuclease (Bordetella bronchiseptica (strain ATCC BAA-588 / NCTC 13252 / RB50) (Alcaligenes bronchisepticus)).